Here is a 94-residue protein sequence, read N- to C-terminus: Pyrimidine/purine nucleoside phosphorylase (94 aa).

Belongs to the nucleoside phosphorylase PpnP family.

It catalyses the reaction a purine D-ribonucleoside + phosphate = a purine nucleobase + alpha-D-ribose 1-phosphate. It carries out the reaction adenosine + phosphate = alpha-D-ribose 1-phosphate + adenine. The enzyme catalyses cytidine + phosphate = cytosine + alpha-D-ribose 1-phosphate. The catalysed reaction is guanosine + phosphate = alpha-D-ribose 1-phosphate + guanine. It catalyses the reaction inosine + phosphate = alpha-D-ribose 1-phosphate + hypoxanthine. It carries out the reaction thymidine + phosphate = 2-deoxy-alpha-D-ribose 1-phosphate + thymine. The enzyme catalyses uridine + phosphate = alpha-D-ribose 1-phosphate + uracil. The catalysed reaction is xanthosine + phosphate = alpha-D-ribose 1-phosphate + xanthine. Catalyzes the phosphorolysis of diverse nucleosides, yielding D-ribose 1-phosphate and the respective free bases. Can use uridine, adenosine, guanosine, cytidine, thymidine, inosine and xanthosine as substrates. Also catalyzes the reverse reactions. This Pseudomonas putida (strain ATCC 700007 / DSM 6899 / JCM 31910 / BCRC 17059 / LMG 24140 / F1) protein is Pyrimidine/purine nucleoside phosphorylase.